A 129-amino-acid chain; its full sequence is Class I hydrophobin 11 (129 aa).

Positions Met-1–Ala-19 are cleaved as a signal peptide. Disulfide bonds link Cys-48–Cys-106, Cys-55–Cys-100, Cys-56–Cys-89, and Cys-107–Cys-122.

This sequence belongs to the fungal hydrophobin family. In terms of assembly, self-assembles to form functional amyloid fibrils called rodlets. Self-assembly into fibrillar rodlets occurs spontaneously at hydrophobic:hydrophilic interfaces and the rodlets further associate laterally to form amphipathic monolayers.

It is found in the secreted. It localises to the cell wall. In terms of biological role, aerial growth, conidiation, and dispersal of filamentous fungi in the environment rely upon a capability of their secreting small amphipathic proteins called hydrophobins (HPBs) with low sequence identity. Class I can self-assemble into an outermost layer of rodlet bundles on aerial cell surfaces, conferring cellular hydrophobicity that supports fungal growth, development and dispersal; whereas Class II form highly ordered films at water-air interfaces through intermolecular interactions but contribute nothing to the rodlet structure. The chain is Class I hydrophobin 11 from Pleurotus ostreatus (strain PC15) (Oyster mushroom).